A 241-amino-acid polypeptide reads, in one-letter code: MTESNDTPIQPEAGDERQHRRIKSFVMRAGRMTEGQQRGLDQGAPLYVLPLADAPVDYDQVFGRSAPRSLEIGFGMGHSLLEMAAAAPEQDFIGVEVHRPGVGALLNGVLTQGLTNLRVYDCDAIEVLNRCIADNSLDRLMLFFPDPWHKSRHHKRRIVQASFAELVRSKLKVGGILHMATDWEPYAEYMLEVMNVAPGYRNLAEDGKCVPRPAERPITKFERRGERLGHGVWDLKFEKLA.

Positions 1–20 (MTESNDTPIQPEAGDERQHR) are disordered. The S-adenosyl-L-methionine site is built by glutamate 71, glutamate 96, aspartate 123, and aspartate 146. The active site involves aspartate 146. Residues lysine 150, aspartate 182, and 219 to 222 (TKFE) each bind substrate.

Belongs to the class I-like SAM-binding methyltransferase superfamily. TrmB family.

The catalysed reaction is guanosine(46) in tRNA + S-adenosyl-L-methionine = N(7)-methylguanosine(46) in tRNA + S-adenosyl-L-homocysteine. Its pathway is tRNA modification; N(7)-methylguanine-tRNA biosynthesis. Catalyzes the formation of N(7)-methylguanine at position 46 (m7G46) in tRNA. In Pseudomonas fluorescens (strain ATCC BAA-477 / NRRL B-23932 / Pf-5), this protein is tRNA (guanine-N(7)-)-methyltransferase.